The primary structure comprises 214 residues: Late embryogenesis abundant protein At1g64065 (214 aa).

Residues 41–61 traverse the membrane as a helical segment; it reads VYSLTIIVIIFALCLILSSIF.

It belongs to the LEA type 2 family.

It is found in the membrane. This Arabidopsis thaliana (Mouse-ear cress) protein is Late embryogenesis abundant protein At1g64065.